Consider the following 635-residue polypeptide: Ligand-gated ion channel 4 (635 aa).

The first 24 residues, 1-24, serve as a signal peptide directing secretion; that stretch reads MIICYSCLTVSILLTIKFVPCRFA. The Extracellular portion of the chain corresponds to 25–324; it reads GIEHQNTKSR…IHMHRRPLFY (300 aa). 4 N-linked (GlcNAc...) asparagine glycosylation sites follow: asparagine 46, asparagine 139, asparagine 177, and asparagine 225. Residues cysteine 238 and cysteine 252 are joined by a disulfide bond. The N-linked (GlcNAc...) asparagine glycan is linked to asparagine 282. The next 3 membrane-spanning stretches (helical) occupy residues 325-345, 355-375, and 381-401; these read VFNH…GFLM, MIIT…ESIP, and VPLI…ATCV. At 402 to 599 the chain is on the cytoplasmic side; the sequence is NVITLNMHRN…QQLASVVDRL (198 aa). The helical transmembrane segment at 600–620 threads the bilayer; that stretch reads LLCLFCTATLFTIICLLIVPV. The N-linked (GlcNAc...) asparagine glycan is linked to asparagine 625.

It belongs to the ligand-gated ion channel (TC 1.A.9) family.

Its subcellular location is the postsynaptic cell membrane. The protein resides in the cell membrane. In terms of biological role, possible acetylcholine receptor. This is Ligand-gated ion channel 4 (lgc-4) from Caenorhabditis elegans.